Here is a 151-residue protein sequence, read N- to C-terminus: Large ribosomal subunit protein uL13 (151 aa).

It belongs to the universal ribosomal protein uL13 family. Part of the 50S ribosomal subunit.

This protein is one of the early assembly proteins of the 50S ribosomal subunit, although it is not seen to bind rRNA by itself. It is important during the early stages of 50S assembly. In Mycoplasma mycoides subsp. mycoides SC (strain CCUG 32753 / NCTC 10114 / PG1), this protein is Large ribosomal subunit protein uL13.